A 62-amino-acid chain; its full sequence is Large ribosomal subunit protein bL28 (62 aa).

Residues 1–23 (MARRCFVTGKSAKAGNARSHSMR) form a disordered region.

This sequence belongs to the bacterial ribosomal protein bL28 family.

The sequence is that of Large ribosomal subunit protein bL28 from Brevibacillus brevis (strain 47 / JCM 6285 / NBRC 100599).